Consider the following 251-residue polypeptide: Chloride intracellular channel protein 5 (251 aa).

Residues 1–98 (MTDSATTNGD…EEFLEETLTP (98 aa)) are required for insertion into the membrane. The G-site motif lies at 32–35 (CPFS). The chain crosses the membrane as a helical span at residues 34 to 54 (FSQRLFMILWLKGVVFNVTTV). The GST C-terminal domain occupies 101–241 (YPKLAAKHRE…AADSEIELAY (141 aa)).

This sequence belongs to the chloride channel CLIC family. As to quaternary structure, component of a multimeric complex consisting of several cytoskeletal proteins, including actin, ezrin, alpha-actinin, gelsolin, and IQGAP1. Interacts with AKAP9. Interacts with TPRN. TPRN, CLIC5 and PTPQR form concentric rings at the base of stereocilia and may form a complex. Interacts with EZR, MYO6 and RDX; the proteins may work together as a complex to stabilize linkages between the plasma membrane and subjacent actin cytoskeleton at the stereocilium base. As to expression, detected in lung and inner ear. Detected in embryonic cochlea, on microvilli-covered apical surfaces of interdental cells, columnar cells of Kolliker's organ, and on stereocilia of inner and outer hair cells (at protein level). Also detected in the eye, where it localizes to lens fiber cells in the lens epithelium (at protein level).

It is found in the golgi apparatus. Its subcellular location is the cytoplasm. It localises to the cytoskeleton. The protein resides in the microtubule organizing center. The protein localises to the centrosome. It is found in the cell cortex. Its subcellular location is the membrane. It localises to the apical cell membrane. The protein resides in the mitochondrion. The protein localises to the cell projection. It is found in the stereocilium. The enzyme catalyses Na(+)(in) = Na(+)(out). It catalyses the reaction K(+)(in) = K(+)(out). It carries out the reaction chloride(in) = chloride(out). Inhibited by F-actin. Its function is as follows. In the soluble state, catalyzes glutaredoxin-like thiol disulfide exchange reactions with reduced glutathione as electron donor. Can insert into membranes and form non-selective ion channels almost equally permeable to Na(+), K(+) and Cl(-). Required for normal hearing. Necessary for the formation of stereocilia in the inner ear and normal development of the organ of Corti. Required for the proper localization of PTPRQ and RDX to the stereocilium base during postnatal maturation of hair bundles. Can insert into membranes and form poorly selective ion channels that may also transport chloride ions. Required for the development and/or maintenance of the proper glomerular endothelial cell and podocyte architecture. Plays a role in formation of the lens suture in the eye, which is important for normal optical properties of the lens. The polypeptide is Chloride intracellular channel protein 5 (Clic5) (Mus musculus (Mouse)).